The sequence spans 815 residues: DNA topoisomerase 1 (815 aa).

A Toprim domain is found at 3–119 (KHLLIVESPA…QRIVFTEITP (117 aa)). Residues Glu9 and Asp82 each coordinate Mg(2+). One can recognise a Topo IA-type catalytic domain in the interval 133-573 (ASDLVDAQQA…KFWVPFKELV (441 aa)). The interval 167 to 172 (SAGRVQ) is interaction with DNA. Tyr308 serves as the catalytic O-(5'-phospho-DNA)-tyrosine intermediate. Residues 760 to 815 (GKPARKNFSTKKTATKNETRKQTTKKRTTDAKATKKVSDKPVKKQIKKRIAPNITE) are disordered. Basic and acidic residues predominate over residues 774–801 (TKNETRKQTTKKRTTDAKATKKVSDKPV).

The protein belongs to the type IA topoisomerase family. Monomer. Requires Mg(2+) as cofactor.

It carries out the reaction ATP-independent breakage of single-stranded DNA, followed by passage and rejoining.. Releases the supercoiling and torsional tension of DNA, which is introduced during the DNA replication and transcription, by transiently cleaving and rejoining one strand of the DNA duplex. Introduces a single-strand break via transesterification at a target site in duplex DNA. The scissile phosphodiester is attacked by the catalytic tyrosine of the enzyme, resulting in the formation of a DNA-(5'-phosphotyrosyl)-enzyme intermediate and the expulsion of a 3'-OH DNA strand. The free DNA strand then undergoes passage around the unbroken strand, thus removing DNA supercoils. Finally, in the religation step, the DNA 3'-OH attacks the covalent intermediate to expel the active-site tyrosine and restore the DNA phosphodiester backbone. This chain is DNA topoisomerase 1, found in Xylella fastidiosa (strain 9a5c).